The sequence spans 527 residues: Peptide chain release factor 3 (527 aa).

Residues 9-277 (AKRRTFAIIS…AVVDWAPRPL (269 aa)) enclose the tr-type G domain. GTP is bound by residues 18-25 (SHPDAGKT), 86-90 (DTPGH), and 140-143 (NKLD).

It belongs to the TRAFAC class translation factor GTPase superfamily. Classic translation factor GTPase family. PrfC subfamily.

It localises to the cytoplasm. Increases the formation of ribosomal termination complexes and stimulates activities of RF-1 and RF-2. It binds guanine nucleotides and has strong preference for UGA stop codons. It may interact directly with the ribosome. The stimulation of RF-1 and RF-2 is significantly reduced by GTP and GDP, but not by GMP. The protein is Peptide chain release factor 3 of Pseudomonas putida (strain W619).